The sequence spans 385 residues: GTPase Obg (385 aa).

An Obg domain is found at 1–159 (MHFIDQAEIE…RRLRLELKLI (159 aa)). Residues 160–328 (AEVGIVGMPN…LLQRVWQCLG (169 aa)) form the OBG-type G domain. GTP-binding positions include 166-173 (GMPNAGKS), 191-195 (FTTLQ), 213-216 (DIPG), 280-283 (NKID), and 309-311 (SAV). Mg(2+)-binding residues include serine 173 and threonine 193.

The protein belongs to the TRAFAC class OBG-HflX-like GTPase superfamily. OBG GTPase family. As to quaternary structure, monomer. Requires Mg(2+) as cofactor.

The protein resides in the cytoplasm. Its function is as follows. An essential GTPase which binds GTP, GDP and possibly (p)ppGpp with moderate affinity, with high nucleotide exchange rates and a fairly low GTP hydrolysis rate. Plays a role in control of the cell cycle, stress response, ribosome biogenesis and in those bacteria that undergo differentiation, in morphogenesis control. This Synechococcus sp. (strain JA-3-3Ab) (Cyanobacteria bacterium Yellowstone A-Prime) protein is GTPase Obg.